Consider the following 232-residue polypeptide: Ribonuclease 3 (232 aa).

One can recognise an RNase III domain in the interval 5-134 (QTVLKNHFAI…FLGALLLDKD (130 aa)). Glutamate 47 serves as a coordination point for Mg(2+). Residue aspartate 51 is part of the active site. Mg(2+) is bound by residues aspartate 120 and glutamate 123. Residue glutamate 123 is part of the active site. The 70-residue stretch at 160-229 (DYKTHLQELL…AKNAVEKGLD (70 aa)) folds into the DRBM domain.

Belongs to the ribonuclease III family. In terms of assembly, homodimer. It depends on Mg(2+) as a cofactor.

The protein resides in the cytoplasm. The enzyme catalyses Endonucleolytic cleavage to 5'-phosphomonoester.. Its function is as follows. Digests double-stranded RNA. Involved in the processing of primary rRNA transcript to yield the immediate precursors to the large and small rRNAs (23S and 16S). Processes some mRNAs, and tRNAs when they are encoded in the rRNA operon. Processes pre-crRNA and tracrRNA of type II CRISPR loci if present in the organism. This is Ribonuclease 3 from Streptococcus pneumoniae (strain P1031).